A 240-amino-acid polypeptide reads, in one-letter code: Transcriptional regulatory protein BaeR (240 aa).

A Response regulatory domain is found at 12 to 125 (RILIVEDEPK…EVVARVKTIL (114 aa)). A 4-aspartylphosphate modification is found at Asp-61. Residues 131 to 234 (QRELQQQDAE…VYGVGYRWEA (104 aa)) constitute a DNA-binding region (ompR/PhoB-type).

Phosphorylated by BaeS.

Its subcellular location is the cytoplasm. In terms of biological role, member of the two-component regulatory system BaeS/BaeR. Activates the mdtABCD operon. The sequence is that of Transcriptional regulatory protein BaeR (baeR) from Escherichia coli O6:H1 (strain CFT073 / ATCC 700928 / UPEC).